The sequence spans 390 residues: 1-acyl-sn-glycerol-3-phosphate acyltransferase 2 (390 aa).

A helical membrane pass occupies residues 2-22; sequence AMAAAVIVPLGILFFISGLVV. Residues 91–96 carry the HXXXXD motif motif; it reads HRSDID. 2 consecutive transmembrane segments (helical) span residues 305-325 and 333-353; these read LAVV…FLHW and KGIA…QILI. The tract at residues 358–390 is disordered; sequence SERSTPAKVAPAKPKDNHQSGPSSQTEVEEKQK.

Belongs to the 1-acyl-sn-glycerol-3-phosphate acyltransferase family.

It localises to the endoplasmic reticulum membrane. It carries out the reaction a 1-acyl-sn-glycero-3-phosphate + an acyl-CoA = a 1,2-diacyl-sn-glycero-3-phosphate + CoA. It functions in the pathway phospholipid metabolism; CDP-diacylglycerol biosynthesis; CDP-diacylglycerol from sn-glycerol 3-phosphate: step 2/3. In terms of biological role, converts lysophosphatidic acid (LPA) into phosphatidic acid by incorporating acyl moiety at the 2 position. This Brassica napus (Rape) protein is 1-acyl-sn-glycerol-3-phosphate acyltransferase 2 (LPAT2).